A 152-amino-acid polypeptide reads, in one-letter code: Atypical leghemoglobin 2-1 (152 aa).

The Globin domain maps to T3–S152. The residue at position 31 (Y31) is a Nitrated tyrosine. S46 is a binding site for heme b. A Phosphoserine modification is found at S46. H64 lines the O2 pocket. Residues K67, H99, and R102 each coordinate heme b. Y140 carries the nitrated tyrosine modification.

This sequence belongs to the plant globin family. In terms of assembly, monomer. In terms of processing, nitrated in effective nodules and particularly in hypoxic conditions; this mechanism may play a protective role in the symbiosis by buffering toxic peroxynitrite NO(2)(-). Nitration level decrease during nodule senescence. Post-translationally, phosphorylation at Ser-46 disrupts the molecular environment of its porphyrin ring oxygen binding pocket, thus leading to a reduced oxygen consumption and to the delivery of oxygen O(2) to symbiosomes. In terms of tissue distribution, mainly expressed in leaves and, at low levels, in roots of non-nodulated plants. However, accumulates also in nodules and roots, and, to a lower extent, in leaves, stems, flowers and fruits, in nodulated plants.

Functionally, atypical leghemoglobin that reversibly binds oxygen O(2) through a pentacoordinated heme iron. In nodules, facilitates the diffusion of oxygen to the bacteroids while preventing the bacterial nitrogenase from being inactivated by buffering dioxygen, nitric oxide and carbon monoxide. This role is essential for symbiotic nitrogen fixation (SNF). Seems not restricted to symbiotic nitrogen fixation and root nodules formation, but also contributes to general plant development and metabolism. This Lotus japonicus (Lotus corniculatus var. japonicus) protein is Atypical leghemoglobin 2-1.